The following is a 2710-amino-acid chain: Serine/threonine-protein kinase ATR (2710 aa).

The FAT domain occupies 1647-2257 (TLAKASFRCQ…LWMMAAVSKS (611 aa)). A PI3K/PI4K catalytic domain is found at 2368-2680 (IADDAEILNS…GVNAAPSLPL (313 aa)). The tract at residues 2374–2380 (ILNSLQK) is G-loop. Residues 2545-2553 (GLGDRHGEN) are catalytic loop. Residues 2565 to 2589 (HVDFSCLFDKGLLLEKPEVVPFRFT) are activation loop. The region spanning 2678-2710 (LPLSVEGQARRLIAEAVSHSNLGKMYVWWMAWF) is the FATC domain.

The protein belongs to the PI3/PI4-kinase family. ATM subfamily.

Its subcellular location is the nucleus. It catalyses the reaction L-seryl-[protein] + ATP = O-phospho-L-seryl-[protein] + ADP + H(+). The catalysed reaction is L-threonyl-[protein] + ATP = O-phospho-L-threonyl-[protein] + ADP + H(+). Probable serine/threonine kinase. Seems to play a central role in cell-cycle regulation by transmitting DNA damage signals to downstream effectors of cell-cycle progression. May recognize the substrate consensus sequence [ST]-Q and phosphorylate histone variant H2AX to form H2AXS139ph at sites of DNA damage, thereby regulating DNA damage response mechanism. This chain is Serine/threonine-protein kinase ATR, found in Oryza sativa subsp. japonica (Rice).